We begin with the raw amino-acid sequence, 323 residues long: Aspartate carbamoyltransferase catalytic subunit (323 aa).

Carbamoyl phosphate is bound by residues Arg65 and Thr66. Lys93 is an L-aspartate binding site. Carbamoyl phosphate-binding residues include Arg115, His149, and Gln152. Positions 182 and 237 each coordinate L-aspartate. Gly278 and Pro279 together coordinate carbamoyl phosphate.

The protein belongs to the aspartate/ornithine carbamoyltransferase superfamily. ATCase family. Heterododecamer (2C3:3R2) of six catalytic PyrB chains organized as two trimers (C3), and six regulatory PyrI chains organized as three dimers (R2).

It carries out the reaction carbamoyl phosphate + L-aspartate = N-carbamoyl-L-aspartate + phosphate + H(+). Its pathway is pyrimidine metabolism; UMP biosynthesis via de novo pathway; (S)-dihydroorotate from bicarbonate: step 2/3. Its function is as follows. Catalyzes the condensation of carbamoyl phosphate and aspartate to form carbamoyl aspartate and inorganic phosphate, the committed step in the de novo pyrimidine nucleotide biosynthesis pathway. The protein is Aspartate carbamoyltransferase catalytic subunit of Aromatoleum aromaticum (strain DSM 19018 / LMG 30748 / EbN1) (Azoarcus sp. (strain EbN1)).